We begin with the raw amino-acid sequence, 217 residues long: Large ribosomal subunit protein uL1 (217 aa).

Belongs to the universal ribosomal protein uL1 family. As to quaternary structure, component of the large ribosomal subunit.

It localises to the cytoplasm. In terms of biological role, component of the large ribosomal subunit. The ribosome is a large ribonucleoprotein complex responsible for the synthesis of proteins in the cell. The chain is Large ribosomal subunit protein uL1 (rpl10a) from Xenopus laevis (African clawed frog).